A 275-amino-acid polypeptide reads, in one-letter code: Lycopene elongase/hydratase (275 aa).

Helical transmembrane passes span 13–33, 38–58, 84–104, 107–127, 134–154, 160–180, 203–223, 225–245, and 253–273; these read FWLY…TTVG, APAV…LYGI, AAVA…AAPL, EAWP…APPL, VLDS…YAGV, PLLA…FSAI, ALAY…LVDV, FGLL…LQVA, and YPAV…WGVV.

Belongs to the UbiA prenyltransferase family.

Its subcellular location is the cell membrane. It catalyses the reaction all-trans-lycopene + dimethylallyl diphosphate + H2O = dihydroisopentenyldehydrorhodopin + diphosphate. It carries out the reaction isopentenyldehydrorhodopin + dimethylallyl diphosphate + H2O = dihydrobisanhydrobacterioruberin + diphosphate. Its pathway is carotenoid biosynthesis. Its activity is regulated as follows. Inhibited by bacterioopsin. Involved in the biosynthesis of the acyclic C50 carotenoid bacterioruberin (BR). Acts as a bifunctional elongase/hydratase that catalyzes the elongation of lycopene by attaching a C(5) isoprene unit at C-2, as well as the hydroxylation of the previous end of the molecule. The enzyme acts at both ends of the substrate, and catalyzes the conversion of lycopene to the C(45) intermediate dihydroisopentenyldehydrorhodopin (DH-IDR) and the conversion of isopentenyldehydrorhodopin (IDR) to the C(50) carotenoid dihydrobisanhydrobacterioruberin (DH-BABR). Can also catalyze the conversion of lycopene to tetrahydrobisanhydrobacterioruberin (TH-BABR). The chain is Lycopene elongase/hydratase from Halobacterium salinarum (strain ATCC 700922 / JCM 11081 / NRC-1) (Halobacterium halobium).